Here is a 356-residue protein sequence, read N- to C-terminus: MADDLDILRNDTLAALAGAQDRAQWDAIRVGTLGKSGALTGLLKQLGRLEPQERKERGQALNRLRDELTAAIEARGRDIEEEALQARLRSERVDVTMPAPAVVTGTIHPISRTIEEMTAIFGAMGFSVAEGPDIESQWHNFSALNTPEHHPARTEHDTFYLPPKNEDGEPRVLRTQTSGVQIRTMLGSKPPIRIIAPGRTYRADHDATHSPMFHQCEGLVVDRNITLGHLKGCLIEFLRVYFDKPNLPVRFRASYFPFTEPSMEVDIGWSKATGEIGGGSDWLEVLGSGMIHPRVLANCGLDPAEWQGFAFGMGIERLAMLKNGIPDLRSFYESDLRWLRHYGFSAFLPATLTEGV.

Glutamate 260 lines the Mg(2+) pocket.

It belongs to the class-II aminoacyl-tRNA synthetase family. Phe-tRNA synthetase alpha subunit type 1 subfamily. As to quaternary structure, tetramer of two alpha and two beta subunits. It depends on Mg(2+) as a cofactor.

It localises to the cytoplasm. It carries out the reaction tRNA(Phe) + L-phenylalanine + ATP = L-phenylalanyl-tRNA(Phe) + AMP + diphosphate + H(+). The polypeptide is Phenylalanine--tRNA ligase alpha subunit (Gluconobacter oxydans (strain 621H) (Gluconobacter suboxydans)).